A 208-amino-acid chain; its full sequence is Large ribosomal subunit protein uL3 (208 aa).

Gln149 carries the N5-methylglutamine modification.

Belongs to the universal ribosomal protein uL3 family. In terms of assembly, part of the 50S ribosomal subunit. Forms a cluster with proteins L14 and L19. Post-translationally, methylated by PrmB.

One of the primary rRNA binding proteins, it binds directly near the 3'-end of the 23S rRNA, where it nucleates assembly of the 50S subunit. This Actinobacillus pleuropneumoniae serotype 5b (strain L20) protein is Large ribosomal subunit protein uL3.